Consider the following 953-residue polypeptide: Calcium-transporting ATPase type 2C member 1 (953 aa).

Residues 1–104 are Cytoplasmic-facing; the sequence is MDNLLPQSRF…NEFDISEDEP (104 aa). The chain crosses the membrane as a helical span at residues 105–125; it reads LWKKYISQFKNPLIMLLLASA. Over 126 to 138 the chain is Lumenal; the sequence is VISVLMHQFDDAV. Residues 139–157 form a helical membrane-spanning segment; that stretch reads SITVAILIVVTVAFVQEYR. The Cytoplasmic segment spans residues 158–296; sequence SEKSLEELSK…APKTPLQKSM (139 aa). A helical transmembrane segment spans residues 297–316; sequence DLLGKQLSFYSFGIIGIIML. Topologically, residues 317-328 are lumenal; it reads VGWLLGKDILEM. A helical transmembrane segment spans residues 329-346; that stretch reads FTISVSLAVAAIPEGLPI. 4 residues coordinate Ca(2+): valine 337, alanine 338, isoleucine 340, and glutamate 342. At 347 to 733 the chain is on the cytoplasmic side; it reads VVTVTLALGV…EEGKGIYNNI (387 aa). Residue aspartate 384 is the 4-aspartylphosphate intermediate of the active site. The Mg(2+) site is built by aspartate 678 and aspartate 682. A helical transmembrane segment spans residues 734-753; the sequence is KNFVRFQLSTSIAALTLISL. At 754 to 763 the chain is on the lumenal side; it reads ATLMNFPNPL. The chain crosses the membrane as a helical span at residues 764–784; the sequence is NAMQILWINIIMDGPPAQSLG. Ca(2+) is bound by residues asparagine 772 and aspartate 776. Residues 785-804 are Cytoplasmic-facing; sequence VEPVDKDVIRKPPRNWKDSI. A helical membrane pass occupies residues 805–824; that stretch reads LTKNLILKILVSSIIIVCGT. The Lumenal segment spans residues 825 to 842; the sequence is LFVFWRELRDNVITPRDT. A helical membrane pass occupies residues 843 to 862; the sequence is TMTFTCFVFFDMFNALSSRS. The Cytoplasmic segment spans residues 863–875; that stretch reads QTKSVFEIGLCSN. A helical transmembrane segment spans residues 876–894; the sequence is KMFCYAVLGSIMGQLLVIY. Topologically, residues 895-909 are lumenal; it reads FPPLQKVFQTESLSI. A helical membrane pass occupies residues 910-930; the sequence is LDLLFLLGLTSSVCIVAEIIK. The Cytoplasmic portion of the chain corresponds to 931–953; sequence KVERSREKIQKPVSSTSSSFLEV.

It belongs to the cation transport ATPase (P-type) (TC 3.A.3) family. Type IIA subfamily. In terms of assembly, monomer. Homodimer.

It localises to the golgi apparatus. It is found in the trans-Golgi network membrane. Its subcellular location is the golgi stack membrane. The enzyme catalyses Ca(2+)(in) + ATP + H2O = Ca(2+)(out) + ADP + phosphate + H(+). The catalysed reaction is Mn(2+)(in) + ATP + H2O = Mn(2+)(out) + ADP + phosphate + H(+). Its function is as follows. ATP-driven pump that supplies the Golgi apparatus with Ca(2+) and Mn(2+) ions, both essential cofactors for processing and trafficking of newly synthesized proteins in the secretory pathway. Within a catalytic cycle, acquires Ca(2+) or Mn(2+) ions on the cytoplasmic side of the membrane and delivers them to the lumenal side. The transfer of ions across the membrane is coupled to ATP hydrolysis and is associated with a transient phosphorylation that shifts the pump conformation from inward-facing to outward-facing state. Plays a primary role in the maintenance of Ca(2+) homeostasis in the trans-Golgi compartment with a functional impact on Golgi and post-Golgi protein sorting as well as a structural impact on cisternae morphology. Responsible for loading the Golgi stores with Ca(2+) ions in keratinocytes, contributing to keratinocyte differentiation and epidermis integrity. Participates in Ca(2+) and Mn(2+) ions uptake into the Golgi store of hippocampal neurons and regulates protein trafficking required for neural polarity. May also play a role in the maintenance of Ca(2+) and Mn(2+) homeostasis and signaling in the cytosol while preventing cytotoxicity. The chain is Calcium-transporting ATPase type 2C member 1 (ATP2C1) from Bos taurus (Bovine).